The sequence spans 210 residues: MKKFTKILSLSTLLFLAGCQSVLNEPTEVQQPGVQIPHNDAQWQQHLQQLAKIQSYSAKGQIGYISPEERFSSHFDWQYRTPTNFGLELSSNLSSKSLKLQRNARGLTISDSEGNSRSDRDMDSLMKEIIGVAFPIDQFAYWLKGQPEQDGNYIVNDKRQLSQFSYHINGEVWKASYVQYHEDRQPNLPKLIVLENGSQTLKIRVDQWAF.

The signal sequence occupies residues Met1–Gly18. Cys19 carries the N-palmitoyl cysteine lipid modification. Cys19 carries S-diacylglycerol cysteine lipidation.

Belongs to the LolB family. In terms of assembly, monomer.

The protein localises to the cell outer membrane. In terms of biological role, plays a critical role in the incorporation of lipoproteins in the outer membrane after they are released by the LolA protein. The chain is Outer-membrane lipoprotein LolB from Actinobacillus pleuropneumoniae serotype 7 (strain AP76).